Consider the following 274-residue polypeptide: Proteasome subunit beta (274 aa).

Positions 1 to 52 are cleaved as a propeptide — removed in mature form; by autocatalysis; sequence MPDPTGVAGRLPAVFMTPGTSSFTDFLSVAAPDLLPGARGPLPAPVTDAAHG. Residue threonine 53 is the Nucleophile of the active site.

This sequence belongs to the peptidase T1B family. In terms of assembly, the 20S proteasome core is composed of 14 alpha and 14 beta subunits that assemble into four stacked heptameric rings, resulting in a barrel-shaped structure. The two inner rings, each composed of seven catalytic beta subunits, are sandwiched by two outer rings, each composed of seven alpha subunits. The catalytic chamber with the active sites is on the inside of the barrel. Has a gated structure, the ends of the cylinder being occluded by the N-termini of the alpha-subunits. Is capped by the proteasome-associated ATPase, ARC.

It is found in the cytoplasm. It carries out the reaction Cleavage of peptide bonds with very broad specificity.. Its pathway is protein degradation; proteasomal Pup-dependent pathway. Its activity is regulated as follows. The formation of the proteasomal ATPase ARC-20S proteasome complex, likely via the docking of the C-termini of ARC into the intersubunit pockets in the alpha-rings, may trigger opening of the gate for substrate entry. Interconversion between the open-gate and close-gate conformations leads to a dynamic regulation of the 20S proteasome proteolysis activity. Its function is as follows. Component of the proteasome core, a large protease complex with broad specificity involved in protein degradation. This chain is Proteasome subunit beta, found in Parafrankia sp. (strain EAN1pec).